The sequence spans 127 residues: PanD regulatory factor (127 aa).

Residues 1 to 127 (MKLTIIRLEK…TAQQGGWEKC (127 aa)) form the N-acetyltransferase domain. Interaction with PanD stretches follow at residues 43–48 (RFNERL) and 66–76 (LRVREVTRRRG). CoA-binding positions include 66–68 (LRV) and 72–79 (TRRRGVGQ).

The protein belongs to the PanZ/PanM family. In terms of assembly, interacts with PanD in the presence of CoA. Forms a heterooctameric complex composed of four PanD subunits and four PanZ subunits. Monomer in solution.

With respect to regulation, activation of PanD processing occurs even at low CoA concentrations. In contrast, full inhibition of PanD catalytic activity only occurs at sufficiently high CoA concentrations. In terms of biological role, controls both the activation and catalytic activity of PanD in a coenzyme A (CoA)-dependent fashion. Binding of CoA or a derivative to PanZ leads to interaction with PanD, which promotes the processing and activation of pro-PanD, and subsequent substrate-mediated inhibition of the active form of PanD. Inhibition of PanD activity is probably the primary metabolic role of PanZ, allowing negative feedback regulation of pantothenate biosynthesis by CoA. This chain is PanD regulatory factor, found in Escherichia coli (strain K12).